The chain runs to 331 residues: L-lactate dehydrogenase A chain (331 aa).

NAD(+) is bound by residues Gly29–Lys57 and Arg98. 3 residues coordinate substrate: Arg105, Asn137, and Arg168. Asn137 serves as a coordination point for NAD(+). His192 acts as the Proton acceptor in catalysis. Residue Thr247 coordinates substrate.

Belongs to the LDH/MDH superfamily. LDH family. As to quaternary structure, homotetramer.

The protein localises to the cytoplasm. The enzyme catalyses (S)-lactate + NAD(+) = pyruvate + NADH + H(+). It participates in fermentation; pyruvate fermentation to lactate; (S)-lactate from pyruvate: step 1/1. In terms of biological role, interconverts simultaneously and stereospecifically pyruvate and lactate with concomitant interconversion of NADH and NAD(+). In Dissostichus mawsoni (Antarctic cod), this protein is L-lactate dehydrogenase A chain (ldha).